Reading from the N-terminus, the 688-residue chain is NADPH-dependent diflavin oxidoreductase 1 (688 aa).

Positions 26–76 (HLHRHADTSPTNQHNTSHKMTTTEPIHVTTGSGESRDHTEPRHVTPTSPNA) are disordered. Residues 33–58 (TSPTNQHNTSHKMTTTEPIHVTTGSG) are compositionally biased toward polar residues. The span at 59–68 (ESRDHTEPRH) shows a compositional bias: basic and acidic residues. A Flavodoxin-like domain is found at 82–227 (ITIAYATETG…MYNEWQARFC (146 aa)). FMN-binding positions include 88 to 93 (TETGNA), 136 to 139 (STTG), 174 to 183 (LGDSSYPRFN), and aspartate 209. In terms of domain architecture, FAD-binding FR-type spans 277–543 (KDVLQGTVVG…KHSTPIPDLD (267 aa)). Residues arginine 453, 483–486 (RLFS), and 515–518 (GVLT) contribute to the FAD site. NADP(+) is bound by residues threonine 554, 607–608 (SR), and 613–617 (GGYVQ). Tryptophan 688 lines the FAD pocket.

The protein belongs to the NADPH-dependent diflavin oxidoreductase NDOR1 family. This sequence in the N-terminal section; belongs to the flavodoxin family. In the C-terminal section; belongs to the flavoprotein pyridine nucleotide cytochrome reductase family. As to quaternary structure, interacts with DRE2; as part of the cytosolic iron-sulfur (Fe-S) protein assembly (CIA) machinery. The cofactor is FAD. FMN serves as cofactor.

The protein localises to the cytoplasm. Its subcellular location is the mitochondrion. It catalyses the reaction 2 oxidized [2Fe-2S]-[protein] + NADPH = 2 reduced [2Fe-2S]-[protein] + NADP(+) + H(+). In terms of biological role, NADPH-dependent reductase which is a central component of the cytosolic iron-sulfur (Fe-S) protein assembly (CIA) machinery. Transfers electrons from NADPH via its FAD and FMN prosthetic groups to the [2Fe-2S] cluster of DRE2, another key component of the CIA machinery. In turn, this reduced cluster provides electrons for assembly of cytosolic iron-sulfur cluster proteins. Positively controls H(2)O(2)-induced cell death. This Yarrowia lipolytica (strain CLIB 122 / E 150) (Yeast) protein is NADPH-dependent diflavin oxidoreductase 1.